The primary structure comprises 323 residues: Zinc finger C2HC domain-containing protein 1A (323 aa).

The C2HC/C3H-type 1 zinc finger occupies 14-43 (ELLPCKICGRTFFPVALKKHGPICQKTATK). Positions 18, 21, 33, and 37 each coordinate Zn(2+). The segment at 42–81 (TKKRKTFDSSRQRAEGTDIPTVKPLKPRPEPPKKPSNWRR) is disordered. The span at 47–57 (TFDSSRQRAEG) shows a compositional bias: basic and acidic residues. A C2HC/C3H-type 2 zinc finger spans residues 117–146 (DYIQCPYCQRRFNENAADRHINFCKEQAAR). Residues C121, C124, H136, and C140 each contribute to the Zn(2+) site. The segment at 149–258 (NKGKFSTDTK…NPASGVLTSK (110 aa)) is disordered. Residues 177–197 (SPGTTSSGSSRLPQPSGTSKT) are compositionally biased toward polar residues. A compositionally biased stretch (low complexity) spans 198–214 (VVGAPSGKVSSVSSSSG). A Phosphoserine modification is found at S221. T242 carries the phosphothreonine modification. S290 bears the Phosphoserine mark.

It belongs to the ZC2HC1 family. Requires Zn(2+) as cofactor.

This Bos taurus (Bovine) protein is Zinc finger C2HC domain-containing protein 1A (ZC2HC1A).